A 171-amino-acid polypeptide reads, in one-letter code: CASP-like protein 0U2 (171 aa).

Over 1–22 the chain is Cytoplasmic; the sequence is MPVFGLAALKLNWEALSTPKFR. A helical transmembrane segment spans residues 23 to 42; sequence VTFAQWVCSLLMWSLMASYS. The Extracellular segment spans residues 43–48; it reads KHGEFK. Residues 49–69 form a helical membrane-spanning segment; sequence FVVVFGLVMWGLASTYLVYQL. The Cytoplasmic segment spans residues 70–77; the sequence is LNGPPLAP. Residues 78–98 traverse the membrane as a helical segment; that stretch reads IVEFWANVAAGSLAFICLVLA. Residues 99-121 lie on the Extracellular side of the membrane; that stretch reads SATCNRAVGEPQTKVCSGELKPK. The chain crosses the membrane as a helical span at residues 122-142; it reads ASAAFAFLLLCAYGGLAYLSW. Topologically, residues 143-171 are cytoplasmic; that stretch reads RTWRNPPTIASYALHDDPEFAQPLHSSHK.

It belongs to the Casparian strip membrane proteins (CASP) family. Homodimer and heterodimers.

The protein localises to the cell membrane. The chain is CASP-like protein 0U2 from Chlorokybus atmophyticus (Soil alga).